The following is a 148-amino-acid chain: Gastrin-releasing peptide (148 aa).

Residues 1-23 (MRGRELPLVLLALVLCLAPRGRA) form the signal peptide. Position 50 is a methionine amide (methionine 50). Residues 54 to 148 (STGESSSVSE…EGRNPQLNQQ (95 aa)) constitute a propeptide that is removed on maturation. The tract at residues 89-148 (EAKENRNHQPPQPKALGNQQPSWDSEDSSNFKDVGSKGKVGRLSAPGSQREGRNPQLNQQ) is disordered.

The protein belongs to the bombesin/neuromedin-B/ranatensin family.

It is found in the secreted. The protein localises to the cytoplasmic vesicle. It localises to the secretory vesicle lumen. Its subcellular location is the cell projection. The protein resides in the neuron projection. In terms of biological role, stimulates the release of gastrin and other gastrointestinal hormones. Contributes to the perception of prurient stimuli and to the transmission of itch signals in the spinal cord that promote scratching behavior. Contributes primarily to nonhistaminergic itch sensation. In one study, shown to act in the amygdala as part of an inhibitory network which inhibits memory specifically related to learned fear. In another study, shown to act on vasoactive intestinal peptide (VIP)-expressing cells in the auditory cortex, most likely via extrasynaptic diffusion from local and long-range sources, to mediate disinhibition of glutamatergic cells via VIP cell-specific GRPR signaling which leads to enhanced auditory fear memories. Contributes to the regulation of food intake. Inhibits voltage-gated sodium channels but enhances voltage-gated potassium channels in hippocampal neurons. Induces sighing by acting directly on the pre-Botzinger complex, a cluster of several thousand neurons in the ventrolateral medulla responsible for inspiration during respiratory activity. Its function is as follows. Induces an itch response through activation of receptors present on mast cells, triggering mast cell degranulation. The protein is Gastrin-releasing peptide (GRP) of Homo sapiens (Human).